The chain runs to 466 residues: Chromosomal replication initiator protein DnaA (466 aa).

Positions 1 to 86 are domain I, interacts with DnaA modulators; the sequence is MSLSLWQQCL…EVGTKPVTQT (86 aa). The domain II stretch occupies residues 86 to 129; the sequence is TLKTPVHNVVAPTQTTTAQPQRVAPAARSGWDNVPAPAEPTYRS. A domain III, AAA+ region region spans residues 130–346; the sequence is NVNVKHTFDN…GALNRVIANA (217 aa). ATP is bound by residues G174, G176, K177, and T178. A domain IV, binds dsDNA region spans residues 347–466; it reads NFTGRAITID…FSNLIRTLSS (120 aa).

It belongs to the DnaA family. As to quaternary structure, oligomerizes as a right-handed, spiral filament on DNA at oriC.

It localises to the cytoplasm. Its function is as follows. Plays an essential role in the initiation and regulation of chromosomal replication. ATP-DnaA binds to the origin of replication (oriC) to initiate formation of the DNA replication initiation complex once per cell cycle. Binds the DnaA box (a 9 base pair repeat at the origin) and separates the double-stranded (ds)DNA. Forms a right-handed helical filament on oriC DNA; dsDNA binds to the exterior of the filament while single-stranded (ss)DNA is stabiized in the filament's interior. The ATP-DnaA-oriC complex binds and stabilizes one strand of the AT-rich DNA unwinding element (DUE), permitting loading of DNA polymerase. After initiation quickly degrades to an ADP-DnaA complex that is not apt for DNA replication. Binds acidic phospholipids. This is Chromosomal replication initiator protein DnaA from Salmonella choleraesuis (strain SC-B67).